A 647-amino-acid chain; its full sequence is Carboxypeptidase Z (647 aa).

A signal peptide spans 1-18 (MVPSLLLLLTGLFRATEP). Residues 35–157 (AQKAKCVDIS…AGEEEGCFDP (123 aa)) enclose the FZ domain. Disulfide bonds link Cys40/Cys106, Cys48/Cys99, Cys90/Cys126, Cys115/Cys154, and Cys119/Cys143. Residues 183-499 (KHHSYSQMVS…DALLNYMEMV (317 aa)) form the Peptidase M14 domain. Positions 245 and 248 each coordinate Zn(2+). A glycan (N-linked (GlcNAc...) asparagine) is linked at Asn278. A Zn(2+)-binding site is contributed by His377. Catalysis depends on Glu469, which acts as the Proton donor/acceptor.

Belongs to the peptidase M14 family. Interacts with WNT4 vie its FZ domain. Zn(2+) is required as a cofactor. In terms of tissue distribution, in the early embryo it is initially expressed throughout the somites and subsequently becomes restricted to the sclerotome. Expressed in somites, paraxial head mesoderm and apical ectodermal ridge.

The protein localises to the secreted. It is found in the extracellular space. Its subcellular location is the extracellular matrix. Its activity is regulated as follows. Inhibited by 2-mercaptomethyl-3-guanidinoethylthiopropanoic acid (MGTA) and guanidinoethylmercaptosuccinic acid (GEMSA). Inhibited by chelating agents such as EDTA and EGTA. Functionally, cleaves substrates with C-terminal arginine residues. Modulates the Wnt signaling pathway, probably by cleaving some undefined protein. Regulates the development of skeletal elements during development, probably by activating WNT4. The protein is Carboxypeptidase Z (CPZ) of Gallus gallus (Chicken).